The sequence spans 87 residues: Type 3 secretion system needle filament protein (87 aa).

Belongs to the SctF family. As to quaternary structure, the core secretion machinery of the T3SS is composed of approximately 20 different proteins, including cytoplasmic components, a base, an export apparatus and a needle. This subunit polymerizes and forms the helical needle filament. In Y.enterocolitica E40, the needles are composed of 139 (plus-minus 19) YscF/SctF subunits.

Its subcellular location is the secreted. The protein localises to the cell surface. With respect to regulation, the secretion and/or polymerization may be controlled by the type III secretion system regulator YopR. In terms of biological role, component of the type III secretion system (T3SS), also called injectisome, which is used to inject bacterial effector proteins into eukaryotic host cells. YscF/SctF forms the external needle filament that protrudes from the bacterial surface. The needle is not sufficient by itself for the formation of a pore allowing translocation of the Yop effectors across the host cell membrane. The chain is Type 3 secretion system needle filament protein from Yersinia enterocolitica.